A 547-amino-acid polypeptide reads, in one-letter code: Phospholipase DDHD1 (547 aa).

Ser-184 is an active-site residue. Residues 258–533 (LKFKVENFFC…ALFLLTFMYK (276 aa)) enclose the DDHD domain. A Phosphoserine modification is found at Ser-370. The disordered stretch occupies residues 414–448 (RSSASQPSEPSKDSLEDDKKPSASPSTTTVATQTL). Positions 423–434 (PSKDSLEDDKKP) are enriched in basic and acidic residues. Residues 435–448 (SASPSTTTVATQTL) are compositionally biased toward low complexity.

The protein belongs to the PA-PLA1 family. Forms homooligomers and, to a much smaller extent, heterooligomers with DDHD2. Interacts with SEC23A and SEC24C. Predominantly expressed in testis, in round and elongating spermatids, but not in spermatocytes (at protein level). Also expressed in the brain, and at lower levels in other tissues such as thymus and lung (at protein level).

The protein localises to the cytoplasm. The enzyme catalyses a 1,2-diacyl-sn-glycero-3-phosphate + H2O = a 2-acyl-sn-glycerol 3-phosphate + a fatty acid + H(+). It carries out the reaction a 1,2-diacyl-sn-glycero-3-phospho-(1D-myo-inositol) + H2O = a 2-acyl-sn-glycero-3-phospho-D-myo-inositol + a fatty acid + H(+). It catalyses the reaction 1-octadecanoyl-2-(5Z,8Z,11Z,14Z-eicosatetraenoyl)-sn-glycero-3-phospho-(1D-myo-inositol) + H2O = 2-(5Z,8Z,11Z,14Z-eicosatetraenoyl)-sn-glycero-3-phospho-(1D-myo-inositol) + octadecanoate + H(+). The catalysed reaction is a 1-acyl-2-(5Z,8Z,11Z,14Z-eicosatetraenoyl)-sn-glycero-3-phospho-(1D-myo-inositol) + H2O = 2-(5Z,8Z,11Z,14Z-eicosatetraenoyl)-sn-glycero-3-phospho-(1D-myo-inositol) + a fatty acid + H(+). The enzyme catalyses 1,2-dihexadecanoyl-sn-glycero-3-phospho-(1D-myo-inositol) + H2O = 2-hexadecanoyl-sn-glycero-3-phospho-(1D-myo-inositol) + hexadecanoate + H(+). It carries out the reaction a 1-acyl-2-(5Z,8Z,11Z,14Z)-eicosatetraenoyl-sn-glycero-3-phosphate + H2O = 2-(5Z,8Z,11Z,14Z-eicosatetraenoyl)-sn-glycero-3-phosphate + a fatty acid + H(+). It catalyses the reaction 1-(9Z-octadecenoyl)-2-(7Z,10Z,13Z,16Z,19Z-docosapentaenoyl)-sn-glycero-3-phospho-1D-myo-inositol + H2O = 2-(7Z,10Z,13Z,16Z,19Z-docosapentaenoyl)-sn-glycero-3-phospho-1D-myo-inositol + (9Z)-octadecenoate + H(+). The catalysed reaction is 1-(9Z-octadecenoyl)-2-(5Z,8Z,11Z,14Z-eicosatetraenoyl)-sn-glycero-3-phospho-1D-myo-inositol + H2O = 2-(5Z,8Z,11Z,14Z-eicosatetraenoyl)-sn-glycero-3-phospho-(1D-myo-inositol) + (9Z)-octadecenoate + H(+). The enzyme catalyses 1,2-di-(9Z-octadecenoyl)-sn-glycero-3-phospho-1D-myo-inositol + H2O = 2-(9Z-octadecenoyl)-sn-glycero-3-phospho-1D-myo-inositol + (9Z)-octadecenoate + H(+). It carries out the reaction 1-(9Z-octadecenoyl)-2-(8Z,11Z,14Z-eicosatrienoyl)-sn-glycero-3-phospho-1D-myo-inositol + H2O = 2-(8Z,11Z,14Z-eicosatrienoyl)-sn-glycero-3-phospho-1D-myo-inositol + (9Z)-octadecenoate + H(+). It catalyses the reaction 1,2-di-(9Z-octadecenoyl)-sn-glycero-3-phosphate + H2O = 2-(9Z-octadecenoyl)-sn-glycero-3-phosphate + (9Z)-octadecenoate + H(+). The catalysed reaction is 1-hexadecanoyl-2-(9Z-octadecenoyl)-sn-glycero-3-phosphate + H2O = 2-(9Z-octadecenoyl)-sn-glycero-3-phosphate + hexadecanoate + H(+). The enzyme catalyses 1-hexadecanoyl-2-(9Z-octadecenoyl)-sn-glycero-3-phospho-L-serine + H2O = 2-(9Z-octadecenoyl)-sn-glycero-3-phospho-L-serine + hexadecanoate + H(+). It carries out the reaction 1,2-di-(5Z,8Z,11Z,14Z)-eicosatetraenoyl-sn-glycero-3-phosphate + H2O = 2-(5Z,8Z,11Z,14Z-eicosatetraenoyl)-sn-glycero-3-phosphate + (5Z,8Z,11Z,14Z)-eicosatetraenoate + H(+). It catalyses the reaction 1-octadecanoyl-2-(5Z,8Z,11Z,14Z-eicosatetraenoyl)-sn-glycero-3-phosphate + H2O = 2-(5Z,8Z,11Z,14Z-eicosatetraenoyl)-sn-glycero-3-phosphate + octadecanoate + H(+). The catalysed reaction is a 1,2-diacyl-sn-glycero-3-phospho-L-serine + H2O = a 2-acyl-sn-glycero-3-phospho-L-serine + a fatty acid + H(+). The enzyme catalyses a 1,2-diacyl-sn-glycero-3-phosphocholine + H2O = a 2-acyl-sn-glycero-3-phosphocholine + a fatty acid + H(+). It carries out the reaction 1,2-di-(9Z-octadecenoyl)-sn-glycero-3-phosphocholine + H2O = (9Z-octadecenoyl)-sn-glycero-3-phosphocholine + (9Z)-octadecenoate + H(+). It catalyses the reaction a 1,2-diacyl-sn-glycero-3-phosphoethanolamine + H2O = a 2-acyl-sn-glycero-3-phosphoethanolamine + a fatty acid + H(+). The catalysed reaction is a 1,2-diacyl-sn-glycero-3-phospho-(1'-sn-glycerol) + H2O = 2-acyl-sn-glycero-3-phospho-(1'-sn-glycerol) + a fatty acid + H(+). The enzyme catalyses 1-hexadecanoyl-2-(9Z-octadecenoyl)-sn-glycero-3-phospho-(1'-sn-glycerol) + H2O = 2-(9Z-octadecenoyl)-sn-glycero-3-phospho-(1'-sn-glycerol) + hexadecanoate + H(+). It carries out the reaction 1-acyl-2-(5Z,8Z,11Z,14Z-eicosatetraenoyl)-sn-glycero-3-phosphocholine + H2O = 2-(5Z,8Z,11Z,14Z)-eicosatetraenoyl-sn-glycero-3-phosphocholine + a fatty acid + H(+). It catalyses the reaction 1-acyl-2-(5Z,8Z,11Z,14Z)-eicosatetraenoyl-sn-glycero-3-phosphoethanolamine + H2O = 2-(5Z,8Z,11Z,14Z)-eicosatetraenoyl-sn-glycero-3-phosphoethanolamine + a fatty acid + H(+). It functions in the pathway phospholipid metabolism; phosphatidylinositol metabolism. In terms of biological role, phospholipase A1 (PLA1) that hydrolyzes ester bonds at the sn-1 position of glycerophospholipids producing a free fatty acid and a lysophospholipid. Prefers phosphatidate (1,2-diacyl-sn-glycero-3-phosphate, PA) as substrate in vitro, but can efficiently hydrolyze phosphatidylinositol (1,2-diacyl-sn-glycero-3-phospho-(1D-myo-inositol), PI), as well as a range of other glycerophospholipid substrates such as phosphatidylcholine (1,2-diacyl-sn-glycero-3-phosphocholine, PC), phosphatidylethanolamine (1,2-diacyl-sn-glycero-3-phosphoethanolamine, PE), phosphatidylserine (1,2-diacyl-sn-glycero-3-phospho-L-serine, PS) and phosphatidylglycerol (1,2-diacyl-sn-glycero-3-phospho-(1'-sn-glycerol), PG). Involved in the regulation of the endogenous content of polyunsaturated PI and PS lipids in the nervous system. Changes in these lipids extend to downstream metabolic products like PI phosphates PIP and PIP2, which play fundamental roles in cell biology. Regulates mitochondrial morphology. These dynamic changes may be due to PA hydrolysis at the mitochondrial surface. May play a regulatory role in spermatogenesis or sperm function. This is Phospholipase DDHD1 from Mus musculus (Mouse).